The sequence spans 209 residues: Ribosomal RNA large subunit methyltransferase E (209 aa).

The S-adenosyl-L-methionine site is built by G63, W65, D83, D99, and D124. The active-site Proton acceptor is K164.

Belongs to the class I-like SAM-binding methyltransferase superfamily. RNA methyltransferase RlmE family.

The protein resides in the cytoplasm. The enzyme catalyses uridine(2552) in 23S rRNA + S-adenosyl-L-methionine = 2'-O-methyluridine(2552) in 23S rRNA + S-adenosyl-L-homocysteine + H(+). Specifically methylates the uridine in position 2552 of 23S rRNA at the 2'-O position of the ribose in the fully assembled 50S ribosomal subunit. The chain is Ribosomal RNA large subunit methyltransferase E from Photobacterium profundum (strain SS9).